Consider the following 286-residue polypeptide: Shikimate dehydrogenase (NADP(+)) (286 aa).

Shikimate is bound by residues 20-22 and T67; that span reads SLS. The active-site Proton acceptor is K71. Residues N92 and D107 each contribute to the shikimate site. NADP(+) contacts are provided by residues 132–136 and M228; that span reads GAGGA. Position 230 (Y230) interacts with shikimate. NADP(+) is bound at residue G251.

The protein belongs to the shikimate dehydrogenase family. In terms of assembly, homodimer.

It catalyses the reaction shikimate + NADP(+) = 3-dehydroshikimate + NADPH + H(+). It participates in metabolic intermediate biosynthesis; chorismate biosynthesis; chorismate from D-erythrose 4-phosphate and phosphoenolpyruvate: step 4/7. Functionally, involved in the biosynthesis of the chorismate, which leads to the biosynthesis of aromatic amino acids. Catalyzes the reversible NADPH linked reduction of 3-dehydroshikimate (DHSA) to yield shikimate (SA). This chain is Shikimate dehydrogenase (NADP(+)), found in Geobacter metallireducens (strain ATCC 53774 / DSM 7210 / GS-15).